The chain runs to 507 residues: Maturase K (507 aa).

Belongs to the intron maturase 2 family. MatK subfamily.

The protein localises to the plastid. It localises to the chloroplast. In terms of biological role, usually encoded in the trnK tRNA gene intron. Probably assists in splicing its own and other chloroplast group II introns. The chain is Maturase K from Browningia hertlingiana (Cactus).